Reading from the N-terminus, the 370-residue chain is Heme A synthase (370 aa).

Helical transmembrane passes span 15-35 (VRIW…VGGA), 104-124 (VIGI…AIGP), 129-149 (ALWI…WMVA), 161-181 (VRLA…VWTL), 200-220 (ALAL…VAGL), 261-280 (QFDH…LHMI), 293-313 (GAVL…FTVL), and 317-337 (PIDL…LAVL). A heme-binding site is contributed by histidine 264. Histidine 324 is a heme binding site.

Belongs to the COX15/CtaA family. Type 2 subfamily. Interacts with CtaB. It depends on heme b as a cofactor.

It is found in the cell membrane. It catalyses the reaction Fe(II)-heme o + 2 A + H2O = Fe(II)-heme a + 2 AH2. Its pathway is porphyrin-containing compound metabolism; heme A biosynthesis; heme A from heme O: step 1/1. In terms of biological role, catalyzes the conversion of heme O to heme A by two successive hydroxylations of the methyl group at C8. The first hydroxylation forms heme I, the second hydroxylation results in an unstable dihydroxymethyl group, which spontaneously dehydrates, resulting in the formyl group of heme A. The protein is Heme A synthase of Rhodopseudomonas palustris (strain TIE-1).